The chain runs to 608 residues: MKWVTFLLLLFISGSAFSRGVFRREAHKSEIAHRFKDLGEQHFKGLVLIAFSQYLQKCPYEEHIKLVQEVTDFAKTCVADENAENCDKSIHTLFGDKLCAIPKLRDNYGELADCCAKQEPERNECFLQHKDDNPNLPPFQRPEAEAMCTSFQENPTSFLGHYLHEVARRHPYFYAPELLYYAEKYNEVLTQCCTESDKAACLTPKLDAVKEKALVAAVRQRMKCSSMQRFGERAFKAWAVARMSQRFPNAEFAEITKLATDVTKINKECCHGDLLECADDRAELAKYMCENQATISSKLQACCDKPVLQKSQCLAEIEHDNIPADLPSIAADFVEDKEVCKNYAEAKDVFLGTFLYEYSRRHPDYSVSLLLRLAKKYEATLEKCCAEGDPPACYGTVLAEFQPLVEEPKNLVKTNCELYEKLGEYGFQNAVLVRYTQKAPQVSTPTLVEAARNLGRVGTKCCTLPEAQRLPCVEDYLSAILNRLCVLHEKTPVSEKVTKCCSGSLVERRPCFSALTVDETYVPKEFKAETFTFHSDICTLPDKEKQIKKQTALAELVKHKPKATEDQLKTVMGDFAQFVDKCCKAADKDNCFATEGPNLVARSKEALA.

A signal peptide spans 1 to 18; the sequence is MKWVTFLLLLFISGSAFS. Positions 19–24 are excised as a propeptide; sequence RGVFRR. Albumin domains lie at 19–211, 212–403, and 404–601; these read RGVF…AVKE, KALV…EFQP, and LVEE…NLVA. H27 lines the Cu cation pocket. The residue at position 29 (S29) is a Phosphoserine. 2 residues coordinate Ca(2+): E30 and D37. C77 and C86 are joined by a disulfide. S89 bears the Phosphoserine mark. H91 contacts Zn(2+). 6 disulfide bridges follow: C99–C115, C114–C125, C148–C193, C192–C201, C224–C270, and C269–C277. E268 lines the Ca(2+) pocket. Zn(2+) contacts are provided by H271 and D273. The Ca(2+) site is built by D273, E276, and D279. 8 disulfides stabilise this stretch: C289-C303, C302-C313, C340-C385, C384-C393, C416-C462, C461-C472, C485-C501, and C500-C511. S297 carries the phosphoserine modification. S443 carries the post-translational modification Phosphoserine. Phosphothreonine occurs at positions 444 and 446. K460 carries the N6-succinyllysine modification. A Phosphoserine modification is found at S513. Intrachain disulfides connect C538–C583 and C582–C591. The residue at position 543 (K543) is an N6-succinyllysine. An N6-methyllysine modification is found at K558. T570 is subject to Phosphothreonine. N6-succinyllysine is present on K588.

It belongs to the ALB/AFP/VDB family. As to quaternary structure, interacts with FCGRT; this interaction regulates ALB homeostasis. Interacts with TASOR. In plasma, occurs in a covalently-linked complex with chromophore-bound alpha-1-microglobulin; this interaction does not prevent fatty acid binding to ALB. In terms of processing, phosphorylated by FAM20C in the extracellular medium. In terms of tissue distribution, plasma.

The protein resides in the secreted. Its function is as follows. Binds water, Ca(2+), Na(+), K(+), fatty acids, hormones, bilirubin and drugs. Its main function is the regulation of the colloidal osmotic pressure of blood. Major zinc transporter in plasma, typically binds about 80% of all plasma zinc. Major calcium and magnesium transporter in plasma, binds approximately 45% of circulating calcium and magnesium in plasma. Potentially has more than two calcium-binding sites and might additionally bind calcium in a non-specific manner. The shared binding site between zinc and calcium at residue Asp-273 suggests a crosstalk between zinc and calcium transport in the blood. The rank order of affinity is zinc &gt; calcium &gt; magnesium. Binds to the bacterial siderophore enterobactin and inhibits enterobactin-mediated iron uptake of E.coli from ferric transferrin, and may thereby limit the utilization of iron and growth of enteric bacteria such as E.coli. Does not prevent iron uptake by the bacterial siderophore aerobactin. This Rattus norvegicus (Rat) protein is Albumin (Alb).